Here is a 1972-residue protein sequence, read N- to C-terminus: Myosin-11 (1972 aa).

3 positions are modified to phosphoserine: serine 8, serine 23, and serine 40. Residues 31 to 81 (AAKRLVWVPSEKQGFEAASIKEEKGDEVVVELVENGKKVTVGKDDIQKMNP) form the Myosin N-terminal SH3-like domain. Residues 85-783 (SKVEDMAELT…VLAHLEEERD (699 aa)) form the Myosin motor domain. N6,N6,N6-trimethyllysine is present on lysine 129. 178-185 (GESGAGKT) contributes to the ATP binding site. 2 actin-binding regions span residues 661–683 (LGKLMTTLRNTTPNFVRCIIPNH) and 762–776 (RIGQSKIFFRTGVLA). In terms of domain architecture, IQ spans 786 to 815 (ITDVIMAFQAMCRGYLARKAFAKRQQQLTA). Positions 844–1934 (LLQVTRQEEE…KSKLRRGNET (1091 aa)) form a coiled coil. Residues 858–882 (EDELQKTKERQQKAENELKELEQKH) are disordered. Threonine 1177 bears the Phosphothreonine mark. Phosphoserine occurs at positions 1684 and 1722. Disordered regions lie at residues 1744–1800 (ELEE…LRSK) and 1866–1972 (EQYK…KASE). Residues 1762-1788 (ATQQAEQLSNELATERSTAQKNESARQ) show a composition bias toward polar residues. 2 stretches are compositionally biased toward basic and acidic residues: residues 1789 to 1800 (QLERQNKELRSK) and 1866 to 1876 (EQYKEQAEKGN). The segment at 1935 to 1972 (SFVPSRRSGGRRVIENADGSEEETDTRDADFNGTKASE) is C-terminal. Residue serine 1954 is modified to Phosphoserine. At threonine 1958 the chain carries Phosphothreonine. Residue serine 1971 is modified to Phosphoserine.

It belongs to the TRAFAC class myosin-kinesin ATPase superfamily. Myosin family. Muscle myosin is a hexameric protein that consists of 2 heavy chain subunits (MHC), 2 alkali light chain subunits (MLC) and 2 regulatory light chain subunits (MLC-2). As to expression, smooth muscle; expressed in the umbilical artery, bladder, esophagus and trachea. Isoform 1 is mostly found in slowly contracting tonic muscles.

Its subcellular location is the melanosome. Muscle contraction. This is Myosin-11 (MYH11) from Homo sapiens (Human).